Consider the following 507-residue polypeptide: Dolichyl pyrophosphate Man9GlcNAc2 alpha-1,3-glucosyltransferase (507 aa).

Over 1 to 2 the chain is Cytoplasmic; that stretch reads ME. Residues 3–23 traverse the membrane as a helical segment; that stretch reads SWTWMTVVVLLGLTVRWTVSL. Residues 24–114 are Lumenal-facing; the sequence is NSYSGAGKPP…SQAHKLFMRT (91 aa). Asn-59 is a glycosylation site (N-linked (GlcNAc...) asparagine). Residues 115–135 traverse the membrane as a helical segment; sequence TVLAADLLIYIPAVLLYCYSL. Over 136 to 143 the chain is Cytoplasmic; the sequence is KEISPKRK. A helical membrane pass occupies residues 144-164; the sequence is IASALCILLYPGLILIDYGHF. Residues 165–172 lie on the Lumenal side of the membrane; it reads QYNSVSLG. The chain crosses the membrane as a helical span at residues 173–193; it reads FALWGVLGVSCDWDLLGSLAF. Residues 194–229 are Cytoplasmic-facing; the sequence is CLALNYKQMELYHSLPFFCFLLGKCFKKGLRGKGSA. The helical transmembrane segment at 230-250 threads the bilayer; the sequence is LFIRIACTVVASFLLCWLPFL. Over 251 to 297 the chain is Lumenal; it reads TEREHALQVVRRLFPVDRGLFEDKVANIWCSLNVFLKIKDILPRHIQ. A helical transmembrane segment spans residues 298-318; sequence IAISFCFTFLSLLPACIKLTV. Topologically, residues 319–332 are cytoplasmic; the sequence is QPSAKGFRFTLVSC. The helical transmembrane segment at 333–353 threads the bilayer; sequence ALSFFLFSFQVHEKSILLVSL. Topologically, residues 354 to 361 are lumenal; that stretch reads PVCLVLTE. The helical transmembrane segment at 362 to 382 threads the bilayer; the sequence is IPFMSTWFLLVSTFSMLPLLL. At 383-385 the chain is on the cytoplasmic side; it reads KDQ. A helical membrane pass occupies residues 386 to 406; that stretch reads LLLPSVVTVMAFLIACSTFFP. The Lumenal segment spans residues 407 to 437; the sequence is MFENTSEEQLQLKSFAVSVRRHLPGFTFLPR. Residues 438–458 traverse the membrane as a helical segment; the sequence is IIQCLFLSSVITMILLTILSV. The Cytoplasmic segment spans residues 459–468; the sequence is TLDPPQKLPD. The chain crosses the membrane as a helical span at residues 469-489; it reads LFSVLICFVSCVNFVFFLVYF. Over 490 to 507 the chain is Lumenal; that stretch reads NIVIMWDSKNGRNRKKID.

Belongs to the ALG6/ALG8 glucosyltransferase family.

The protein resides in the endoplasmic reticulum membrane. The enzyme catalyses an alpha-D-Man-(1-&gt;2)-alpha-D-Man-(1-&gt;2)-alpha-D-Man-(1-&gt;3)-[alpha-D-Man-(1-&gt;2)-alpha-D-Man-(1-&gt;3)-[alpha-D-Man-(1-&gt;2)-alpha-D-Man-(1-&gt;6)]-alpha-D-Man-(1-&gt;6)]-beta-D-Man-(1-&gt;4)-beta-D-GlcNAc-(1-&gt;4)-alpha-D-GlcNAc-diphospho-di-trans,poly-cis-dolichol + a di-trans,poly-cis-dolichyl beta-D-glucosyl phosphate = an alpha-D-Glc-(1-&gt;3)-alpha-D-Man-(1-&gt;2)-alpha-D-Man-(1-&gt;2)-alpha-D-Man-(1-&gt;3)-[alpha-D-Man-(1-&gt;2)-alpha-D-Man-(1-&gt;3)-[alpha-D-Man-(1-&gt;2)-alpha-D-Man-(1-&gt;6)]-alpha-D-Man-(1-&gt;6)]-beta-D-Man-(1-&gt;4)-beta-D-GlcNAc-(1-&gt;4)-alpha-D-GlcNAc-diphospho-di-trans,poly-cis-dolichol + a di-trans,poly-cis-dolichyl phosphate + H(+). It participates in protein modification; protein glycosylation. Its function is as follows. Dolichyl pyrophosphate Man9GlcNAc2 alpha-1,3-glucosyltransferase that operates in the biosynthetic pathway of dolichol-linked oligosaccharides, the glycan precursors employed in protein asparagine (N)-glycosylation. The assembly of dolichol-linked oligosaccharides begins on the cytosolic side of the endoplasmic reticulum membrane and finishes in its lumen. The sequential addition of sugars to dolichol pyrophosphate produces dolichol-linked oligosaccharides containing fourteen sugars, including two GlcNAcs, nine mannoses and three glucoses. Once assembled, the oligosaccharide is transferred from the lipid to nascent proteins by oligosaccharyltransferases. In the lumen of the endoplasmic reticulum, adds the first glucose residue from dolichyl phosphate glucose (Dol-P-Glc) onto the lipid-linked oligosaccharide intermediate Man(9)GlcNAc(2)-PP-Dol to produce Glc(1)Man(9)GlcNAc(2)-PP-Dol. Glc(1)Man(9)GlcNAc(2)-PP-Dol is a substrate for ALG8, the following enzyme in the biosynthetic pathway. This Rattus norvegicus (Rat) protein is Dolichyl pyrophosphate Man9GlcNAc2 alpha-1,3-glucosyltransferase.